The following is a 337-amino-acid chain: MEQQLPLLAPDSKAATSSPLCLTLDNPTSTSTSPAVPSSAPPPAAALEPSRQSFHERETDAIKAKIMSHPLYPALLRAFIDCQKVGAPPEVVGRLSALAGELDSRAEDRYLQGQSSDPELDEFMETYIDMLVSYRQELTRPIQEADQFFRNMEAQIDSFTLDDNGSEGGNSSEDEQEAGGGDMASAGLPEITSPCAEDKELKSHLLNKYSGYLSSLWRELSKKKKKGKLPRDARQKLLHWWQLHYRWPYPSELEKAALAESTGLDAKQINNWFINQRKRHWKPTPPAMEYRSLQPAGAASYGGASAGASTSGGGSAVVRGMEGQHFTGGGAYPRGDP.

2 disordered regions span residues M1–E56 and F159–E190. Low complexity predominate over residues P27 to S38. The region spanning E200–L220 is the ELK domain. The homeobox; TALE-type DNA-binding region spans S221–T284.

It belongs to the TALE/KNOX homeobox family.

It localises to the nucleus. In Oryza sativa subsp. japonica (Rice), this protein is Homeobox protein knotted-1-like 4 (OSH10).